The primary structure comprises 443 residues: Threonine/serine transporter TdcC (443 aa).

A run of 11 helical transmembrane segments spans residues 22-42, 44-64, 97-117, 140-160, 163-183, 207-227, 259-279, 319-339, 366-386, 389-409, and 423-443; these read TTWTLGLFGTAIGAGVLFFPI, AGFGGLIPILLMLVLAYPIAF, GVVITFLYFFAICPLLWIYGV, FVALFLLLLMAFVIWFGKDLM, VMSFLVFPFIASLILISLSLI, ILVTVWLGISIMVFSFNFSPI, ASLLMVAVVMFFAFSCLFTLS, ASIIALVAIFKSFFGHYLGTL, ISMIFIMGSTWVVAYANPNIL, IEAMGAPIIASLLCLLPMFAI, and ENLFVTAVGLLTILNIVYKLF.

The protein belongs to the amino acid/polyamine transporter 2 family. SdaC/TdcC subfamily.

The protein resides in the cell inner membrane. The catalysed reaction is L-threonine(in) + H(+)(in) = L-threonine(out) + H(+)(out). It carries out the reaction L-serine(in) + H(+)(in) = L-serine(out) + H(+)(out). Involved in the import of threonine and serine into the cell, with the concomitant import of a proton (symport system). The protein is Threonine/serine transporter TdcC of Enterobacter sp. (strain 638).